The following is a 297-amino-acid chain: 4-hydroxy-tetrahydrodipicolinate synthase (297 aa).

Residue T49 participates in pyruvate binding. Y137 (proton donor/acceptor) is an active-site residue. K166 serves as the catalytic Schiff-base intermediate with substrate. Residue I208 coordinates pyruvate.

This sequence belongs to the DapA family. In terms of assembly, homotetramer; dimer of dimers.

Its subcellular location is the cytoplasm. It carries out the reaction L-aspartate 4-semialdehyde + pyruvate = (2S,4S)-4-hydroxy-2,3,4,5-tetrahydrodipicolinate + H2O + H(+). Its pathway is amino-acid biosynthesis; L-lysine biosynthesis via DAP pathway; (S)-tetrahydrodipicolinate from L-aspartate: step 3/4. Catalyzes the condensation of (S)-aspartate-beta-semialdehyde [(S)-ASA] and pyruvate to 4-hydroxy-tetrahydrodipicolinate (HTPA). This chain is 4-hydroxy-tetrahydrodipicolinate synthase, found in Phocaeicola vulgatus (strain ATCC 8482 / DSM 1447 / JCM 5826 / CCUG 4940 / NBRC 14291 / NCTC 11154) (Bacteroides vulgatus).